Reading from the N-terminus, the 407-residue chain is Lysophospholipid transporter LplT (407 aa).

The next 11 helical transmembrane spans lie at 18-38, 53-73, 91-111, 139-159, 163-183, 229-249, 257-277, 286-306, 310-330, 343-365, and 375-395; these read AVII…FATL, FLQM…GQIA, AGAL…LVGV, LMEA…GVLA, IYGA…ANML, WGAG…ALGI, LLNA…AKLV, LPAG…HNLM, SLLI…NALL, AIAV…YSLV, and IGIG…VWLI.

It belongs to the major facilitator superfamily. LplT (TC 2.A.1.42) family.

It localises to the cell inner membrane. Functionally, catalyzes the facilitated diffusion of 2-acyl-glycero-3-phosphoethanolamine (2-acyl-GPE) into the cell. The chain is Lysophospholipid transporter LplT from Pectobacterium carotovorum subsp. carotovorum (strain PC1).